A 309-amino-acid polypeptide reads, in one-letter code: MPVRERPSMIVRPRPNFLQLFFIMRGSVVPRILPQIFGFAVYSAVILALARWFELDLGVFNITPFGLVGVTLSIYLSFRNNAAYDRWWEARKLWGTLVFEIRNLARATTSLIPDPAEQRALLMEALAFCHFLRGQLRKTDSIKDARAFIDAQAETVAGFANPADEMVRRMGRRANAQRRAGDVDPIGFRILDERLASITAIQAGCERIAGTPLPFAYTLLVHRTAYIVCLLLPIGLISTTGWATPLFTALIAYTFFGLDALSEELEDPFGTEANDLALDGLCRVCEISVFEALGEAPPKMLPAEKFYFS.

3 helical membrane-spanning segments follow: residues 32 to 52 (ILPQIFGFAVYSAVILALARW), 58 to 78 (GVFNITPFGLVGVTLSIYLSF), and 227 to 247 (IVCLLLPIGLISTTGWATPLF).

It belongs to the anion channel-forming bestrophin (TC 1.A.46) family.

It localises to the cell membrane. The protein is Voltage-dependent anion channel-forming protein mll4386 of Mesorhizobium japonicum (strain LMG 29417 / CECT 9101 / MAFF 303099) (Mesorhizobium loti (strain MAFF 303099)).